Consider the following 320-residue polypeptide: Cytochrome f (320 aa).

An N-terminal signal peptide occupies residues 1–35 (MQNRNTFSWIKEQMTRSISVSIMIYVITRTAISNA). The heme site is built by Y36, C56, C59, and H60. Residues 286 to 306 (VQGLLFFLASVILAQIFLVLK) form a helical membrane-spanning segment.

This sequence belongs to the cytochrome f family. As to quaternary structure, the 4 large subunits of the cytochrome b6-f complex are cytochrome b6, subunit IV (17 kDa polypeptide, petD), cytochrome f and the Rieske protein, while the 4 small subunits are PetG, PetL, PetM and PetN. The complex functions as a dimer. Heme serves as cofactor.

The protein localises to the plastid. The protein resides in the chloroplast thylakoid membrane. Component of the cytochrome b6-f complex, which mediates electron transfer between photosystem II (PSII) and photosystem I (PSI), cyclic electron flow around PSI, and state transitions. This is Cytochrome f from Platanus occidentalis (Sycamore).